We begin with the raw amino-acid sequence, 625 residues long: uncharacterized protein (625 aa).

The segment at residues 23–51 (CLACRRKKLKCDHGRPCSNCLKRSTIQSC) is a DNA-binding region (zn(2)-C6 fungal-type). Over residues 93-113 (GTKSQSDYENQQSHNLPSTPS) the composition is skewed to polar residues. The segment at 93-119 (GTKSQSDYENQQSHNLPSTPSADAETQ) is disordered.

Its subcellular location is the nucleus. The protein localises to the cytoplasm. It is found in the cytoskeleton. The protein resides in the spindle. This is an uncharacterized protein from Schizosaccharomyces pombe (strain 972 / ATCC 24843) (Fission yeast).